Here is a 466-residue protein sequence, read N- to C-terminus: Mitochondrial-processing peptidase subunit beta (466 aa).

Zn(2+) is bound at residue H73. E76 acts as the Proton acceptor in catalysis. H77 and E153 together coordinate Zn(2+).

The protein belongs to the peptidase M16 family. As to quaternary structure, heterodimer of mppA (alpha) and mppB (beta) subunits, forming the mitochondrial processing protease (MPP) in which mppA is involved in substrate recognition and binding and mppB is the catalytic subunit. The cofactor is Zn(2+).

The protein localises to the mitochondrion matrix. The enzyme catalyses Release of N-terminal transit peptides from precursor proteins imported into the mitochondrion, typically with Arg in position P2.. With respect to regulation, binding to mppA is required for catalytic activity. Its function is as follows. Catalytic subunit of the essential mitochondrial processing protease (MPP), which cleaves the mitochondrial sequence off newly imported precursors proteins. Preferentially, cleaves after an arginine at position P2. This is Mitochondrial-processing peptidase subunit beta (mppB) from Lentinula edodes (Shiitake mushroom).